Here is a 249-residue protein sequence, read N- to C-terminus: 1-(5-phosphoribosyl)-5-[(5-phosphoribosylamino)methylideneamino] imidazole-4-carboxamide isomerase (249 aa).

D8 functions as the Proton acceptor in the catalytic mechanism. D129 acts as the Proton donor in catalysis.

Belongs to the HisA/HisF family.

It is found in the cytoplasm. It catalyses the reaction 1-(5-phospho-beta-D-ribosyl)-5-[(5-phospho-beta-D-ribosylamino)methylideneamino]imidazole-4-carboxamide = 5-[(5-phospho-1-deoxy-D-ribulos-1-ylimino)methylamino]-1-(5-phospho-beta-D-ribosyl)imidazole-4-carboxamide. It participates in amino-acid biosynthesis; L-histidine biosynthesis; L-histidine from 5-phospho-alpha-D-ribose 1-diphosphate: step 4/9. This is 1-(5-phosphoribosyl)-5-[(5-phosphoribosylamino)methylideneamino] imidazole-4-carboxamide isomerase from Magnetococcus marinus (strain ATCC BAA-1437 / JCM 17883 / MC-1).